Here is a 475-residue protein sequence, read N- to C-terminus: Ribulose bisphosphate carboxylase large chain (475 aa).

A propeptide spanning residues 1 to 2 (MS) is cleaved from the precursor. At Pro3 the chain carries N-acetylproline. N6,N6,N6-trimethyllysine is present on Lys14. The substrate site is built by Asn123 and Thr173. Lys175 acts as the Proton acceptor in catalysis. Lys177 provides a ligand contact to substrate. The Mg(2+) site is built by Lys201, Asp203, and Glu204. Lys201 carries the N6-carboxylysine modification. The Proton acceptor role is filled by His294. Substrate contacts are provided by Arg295, His327, and Ser379.

This sequence belongs to the RuBisCO large chain family. Type I subfamily. In terms of assembly, heterohexadecamer of 8 large chains and 8 small chains. Requires Mg(2+) as cofactor.

The protein localises to the plastid. Its subcellular location is the chloroplast. The enzyme catalyses 2 (2R)-3-phosphoglycerate + 2 H(+) = D-ribulose 1,5-bisphosphate + CO2 + H2O. It catalyses the reaction D-ribulose 1,5-bisphosphate + O2 = 2-phosphoglycolate + (2R)-3-phosphoglycerate + 2 H(+). In terms of biological role, ruBisCO catalyzes two reactions: the carboxylation of D-ribulose 1,5-bisphosphate, the primary event in carbon dioxide fixation, as well as the oxidative fragmentation of the pentose substrate in the photorespiration process. Both reactions occur simultaneously and in competition at the same active site. The polypeptide is Ribulose bisphosphate carboxylase large chain (Coleochaete orbicularis (Charophycean green alga)).